A 1541-amino-acid chain; its full sequence is Regulator of G-protein signaling loco (1541 aa).

The disordered stretch occupies residues methionine 1–tyrosine 66. A compositionally biased stretch (low complexity) spans threonine 11 to glycine 36. A compositionally biased stretch (polar residues) spans isoleucine 40 to glutamine 53. Positions threonine 71–tyrosine 148 constitute a PDZ domain. The tract at residues alanine 182–proline 222 is disordered. Over residues valine 201–threonine 214 the composition is skewed to basic and acidic residues. Positions alanine 247–threonine 423 constitute a PID domain. 2 disordered regions span residues glycine 449–aspartate 473 and serine 708–asparagine 761. 2 stretches are compositionally biased toward polar residues: residues proline 457 to aspartate 473 and glutamate 744 to asparagine 761. In terms of domain architecture, RGS spans serine 827–valine 943. A disordered region spans residues serine 978 to arginine 1004. Over residues arginine 987 to serine 999 the composition is skewed to basic residues. RBD domains follow at residues serine 1072 to arginine 1142 and valine 1143 to valine 1213. The tract at residues aspartate 1258 to valine 1327 is disordered. Positions methionine 1273 to leucine 1285 are enriched in polar residues. A compositionally biased stretch (low complexity) spans threonine 1312–glutamine 1325. The region spanning glutamine 1354–glutamate 1376 is the GoLoco domain. Residues lysine 1410 to lysine 1513 form a disordered region. The span at alanine 1460–lysine 1469 shows a compositional bias: pro residues. Residues proline 1483–threonine 1499 show a composition bias toward polar residues.

As to quaternary structure, interacts (via GoLoco and RGS domains) with Galphai (via GDP- or GTP-bound forms). Expressed in surface and longitudinal glial cells, gut and heart (at protein level).

It localises to the cytoplasm. The protein resides in the cell membrane. The protein localises to the apical cell membrane. Its function is as follows. Acts as a regulator of G protein signaling (RGS). Modulates G protein alpha subunits nucleotide exchange and hydrolysis activities by functioning either as a GTPase-activating protein (GAP), thereby driving G protein alpha subunits into their inactive GDP-bound form, or as a GDP-dissociation inhibitor (GDI). Confers GDI and GAP activities on G(i) alpha subunit Galphai. Confers GAP activity on G(o)-alpha subunit Galphao and G(i) alpha subunit Galphai. Involved in the dorsal-ventral axis formation of the egg. Acts as a G-protein signaling for glial cell differentiation during embryogenesis; Galphai, Galphao and the G-protein coupled receptor, moody, are required in the surface glia to achieve effective insulation of the nerve cord. May be essential for nurse cell dumping during oogenesis. Required in neuroblast asymmetrical cell division. Plays a role in stress resistance and life span control. The chain is Regulator of G-protein signaling loco (loco) from Drosophila melanogaster (Fruit fly).